A 155-amino-acid polypeptide reads, in one-letter code: Endoribonuclease YbeY (155 aa).

Zn(2+) contacts are provided by histidine 117, histidine 121, and histidine 127.

Belongs to the endoribonuclease YbeY family. The cofactor is Zn(2+).

Its subcellular location is the cytoplasm. Functionally, single strand-specific metallo-endoribonuclease involved in late-stage 70S ribosome quality control and in maturation of the 3' terminus of the 16S rRNA. The chain is Endoribonuclease YbeY from Treponema denticola (strain ATCC 35405 / DSM 14222 / CIP 103919 / JCM 8153 / KCTC 15104).